Reading from the N-terminus, the 1358-residue chain is DNA-directed RNA polymerase subunit beta (1358 aa).

Belongs to the RNA polymerase beta chain family. In terms of assembly, the RNAP catalytic core consists of 2 alpha, 1 beta, 1 beta' and 1 omega subunit. When a sigma factor is associated with the core the holoenzyme is formed, which can initiate transcription.

The catalysed reaction is RNA(n) + a ribonucleoside 5'-triphosphate = RNA(n+1) + diphosphate. In terms of biological role, DNA-dependent RNA polymerase catalyzes the transcription of DNA into RNA using the four ribonucleoside triphosphates as substrates. This Francisella tularensis subsp. novicida (strain U112) protein is DNA-directed RNA polymerase subunit beta.